The sequence spans 893 residues: TBC domain-containing protein kinase-like protein (893 aa).

The Protein kinase domain occupies 1–273 (MFPLKDAEMG…PDQLMKDKVF (273 aa)). The 186-residue stretch at 466–651 (DIPPLMRGLT…HLWDTLLLGN (186 aa)) folds into the Rab-GAP TBC domain. Positions 710-749 (YRQHAQPPKPSSDSSGGRSSAPYFSAECPDPPKTDLSRES) are disordered. A compositionally biased stretch (low complexity) spans 720–729 (SSDSSGGRSS). The 100-residue stretch at 790–889 (SKPKLLVVDI…IKPTGLLTIP (100 aa)) folds into the Rhodanese domain.

The protein belongs to the protein kinase superfamily. Component of the FERRY complex composed of five subunits, TBCK, PPP1R21, FERRY3, CRYZL1 and GATD1 with a ratio of 1:2:1:2:4, respectively.

The protein resides in the cytoplasm. Its subcellular location is the cytoskeleton. The protein localises to the spindle. It localises to the midbody. It is found in the early endosome. Component of the FERRY complex (Five-subunit Endosomal Rab5 and RNA/ribosome intermediary). The FERRY complex directly interacts with mRNAs and RAB5A, and functions as a RAB5A effector involved in the localization and the distribution of specific mRNAs most likely by mediating their endosomal transport. The complex recruits mRNAs and ribosomes to early endosomes through direct mRNA-interaction. Also involved in the modulation of mTOR signaling and expression of mTOR complex components. Involved in the control of actin-cytoskeleton organization. The protein is TBC domain-containing protein kinase-like protein of Homo sapiens (Human).